A 591-amino-acid chain; its full sequence is V-type ATP synthase alpha chain (591 aa).

232-239 (GPFGAGKT) contacts ATP.

This sequence belongs to the ATPase alpha/beta chains family.

It carries out the reaction ATP + H2O + 4 H(+)(in) = ADP + phosphate + 5 H(+)(out). Functionally, produces ATP from ADP in the presence of a proton gradient across the membrane. The V-type alpha chain is a catalytic subunit. This is V-type ATP synthase alpha chain from Clostridium perfringens (strain ATCC 13124 / DSM 756 / JCM 1290 / NCIMB 6125 / NCTC 8237 / Type A).